The chain runs to 376 residues: uncharacterized protein (376 aa).

The N-terminal stretch at 1 to 22 (MVATGRIIITLLAAALDEIILA) is a signal peptide.

It belongs to the ascovirus HvAV ORF17 family.

This is an uncharacterized protein from Heliothis virescens ascovirus 3e (HvAV-3e).